The chain runs to 495 residues: MGDEYMDDDEDYGFEYEDDSGSEPDVDMENQYYTAKGLRSDGKLDEAIKSFEKVLELEGEKGEWGFKALKQMIKITFGQNRLEKMLEYYRQLLTYIKSAVTKNYSEKSINAILDYISTSRQMDLLQHFYETTLDALKDAKNERLWFKTNTKLGKLFFDLHEFTKLEKIVKQLKVSCKNEQGEEDQRKGTQLLEIYALEIQMYTEQKNNKALKWVYELATQAIHTKSAIPHPLILGTIRECGGKMHLRDGRFLDAHTDFFEAFKNYDESGSPRRTTCLKYLVLANMLIKSDINPFDSQEAKPFKNEPEIVAMTQMVQAYQDNDIQAFEQIMAAHQDSIMADPFIREHTEELMNNIRTQVLLRLIRPYTNVRISYLSQKLKVSQKEVIHLLVDAILDDGLEAKINEESGMIEMPKNKKKMMVTSLVVPNAGDQGTTKSDSKPGTSSEPSTTTSVTSSILQGPPATSSCHQELSMDGLRVWAERIDSIQSNIGTRIKF.

A disordered region spans residues 1 to 26 (MGDEYMDDDEDYGFEYEDDSGSEPDV). A PCI domain is found at 254–416 (AHTDFFEAFK…GMIEMPKNKK (163 aa)). The tract at residues 426–468 (PNAGDQGTTKSDSKPGTSSEPSTTTSVTSSILQGPPATSSCHQ) is disordered. Positions 430–441 (DQGTTKSDSKPG) are enriched in polar residues. Over residues 442–455 (TSSEPSTTTSVTSS) the composition is skewed to low complexity.

The protein belongs to the CSN2 family. Component of the CSN complex, probably composed of csn-1, csn-2, csn-3, csn-4, csn-5, csn-6 and csn-7. Within the complex it probably interacts directly with csn-1, csn-3 and csn-4.

The protein localises to the cytoplasm. It localises to the nucleus. Functionally, essential component of the COP9 signalosome complex (CSN), a complex involved in various cellular and developmental processes. The CSN complex is an essential regulator of the ubiquitin (Ubl) conjugation pathway by mediating the deneddylation of the cullin subunits of the SCF-type E3 ligase complexes, leading to decrease the Ubl ligase activity of SCF. The CSN complex plays an essential role in embryogenesis and oogenesis and is required to regulate microtubule stability in the early embryo. Mediates mei-3/katanin targeting for degradation at the meiosis to mitosis transition via deneddylation of cul-3. This chain is COP9 signalosome complex subunit 2 (csn-2), found in Caenorhabditis elegans.